Here is a 525-residue protein sequence, read N- to C-terminus: MATLLRSKLSNVATSVSNKSQAKMSGMFARMGFQAATDEEAVGFAHCDDLDFEHRQGLQMDILKAEGEPCGDEGAEAPVEGDIHYQRGSGAPLPPSGSKDQVGGGGEFGGHDKPKITAWEAGWNVTNAIQGMFVLGLPYAILHGGYLGLFLIIFAAVVCCYTGKILIACLYEENEDGEVVRVRDSYVAIANACCAPRFPTLGGRVVNVAQIIELVMTCILYVVVSGNLMYNSFPGLPVSQKSWSIIATAVLLPCAFLKNLKAVSKFSLLCTLAHFVINILVIAYCLSRARDWAWEKVKFYIDVKKFPISIGIIVFSYTSQIFLPSLEGNMQQPSEFHCMMNWTHIAACVLKGLFALVAYLTWADETKEVITDNLPGSIRAVVNIFLVAKALLSYPLPFFAAVEVLEKSLFQEGSRAFFPACYSGDGRLKSWGLTLRCALVVFTLLMAIYVPHFALLMGLTGSLTGAGLCFLLPSLFHLRLLWRKLLWHQVFFDVAIFVIGGICSVSGFVHSLEGLIEAYRTNAED.

The Cytoplasmic segment spans residues methionine 1–methionine 132. A disordered region spans residues isoleucine 83–glutamate 107. Residues phenylalanine 133–isoleucine 153 form a helical membrane-spanning segment. At phenylalanine 154–arginine 204 the chain is on the lumenal, vesicle side. At tyrosine 186 the chain carries 3'-nitrotyrosine. Residues valine 205–serine 225 form a helical membrane-spanning segment. Over glycine 226–lysine 265 the chain is Cytoplasmic. Residues phenylalanine 266–leucine 286 traverse the membrane as a helical segment. Over serine 287–lysine 305 the chain is Lumenal, vesicle. The helical transmembrane segment at phenylalanine 306–leucine 326 threads the bilayer. Residues glutamate 327–asparagine 341 lie on the Cytoplasmic side of the membrane. The chain crosses the membrane as a helical span at residues tryptophan 342–tryptophan 362. The Lumenal, vesicle segment spans residues alanine 363–asparagine 383. The helical transmembrane segment at isoleucine 384–valine 404 threads the bilayer. Topologically, residues leucine 405 to alanine 438 are cytoplasmic. The helical transmembrane segment at leucine 439–leucine 459 threads the bilayer. Residues threonine 460–glycine 461 lie on the Lumenal, vesicle side of the membrane. The helical transmembrane segment at serine 462–tryptophan 482 threads the bilayer. At arginine 483–glutamine 489 the chain is on the cytoplasmic side. Residues valine 490 to histidine 510 form a helical membrane-spanning segment. At serine 511–aspartate 525 the chain is on the lumenal, vesicle side.

It belongs to the amino acid/polyamine transporter 2 family. As to expression, retina. Expressed throughout the horizontal cells or more specifically at the terminals.

The protein resides in the cytoplasmic vesicle membrane. Its subcellular location is the presynapse. The enzyme catalyses 4-aminobutanoate(out) + n H(+)(in) = 4-aminobutanoate(in) + n H(+)(out). The catalysed reaction is glycine(out) + n H(+)(in) = glycine(in) + n H(+)(out). It carries out the reaction beta-alanine(out) + n H(+)(in) = beta-alanine(in) + n H(+)(out). Functionally, antiporter that exchanges vesicular protons for cytosolic 4-aminobutanoate or to a lesser extend glycine, thus allowing their secretion from nerve terminals. The transport is equally dependent on the chemical and electrical components of the proton gradient. May also transport beta-alanine. Acidification of GABAergic synaptic vesicles is a prerequisite for 4-aminobutanoate uptake. In Homo sapiens (Human), this protein is Vesicular inhibitory amino acid transporter.